Consider the following 329-residue polypeptide: Ferredoxin--NADP reductase (329 aa).

Positions 28, 36, 41, 81, 115, 282, and 323 each coordinate FAD.

The protein belongs to the ferredoxin--NADP reductase type 2 family. In terms of assembly, homodimer. FAD is required as a cofactor.

The enzyme catalyses 2 reduced [2Fe-2S]-[ferredoxin] + NADP(+) + H(+) = 2 oxidized [2Fe-2S]-[ferredoxin] + NADPH. In Anaplasma marginale (strain St. Maries), this protein is Ferredoxin--NADP reductase.